Reading from the N-terminus, the 395-residue chain is Acetyl-CoA acetyltransferase (395 aa).

Cysteine 90 functions as the Acyl-thioester intermediate in the catalytic mechanism. CoA is bound by residues tyrosine 185 and lysine 230. Position 185 (tyrosine 185) interacts with K(+). Residues alanine 246, alanine 247, and alanine 249 each coordinate K(+). Serine 250 is a CoA binding site. Valine 347 contributes to the K(+) binding site. Catalysis depends on proton acceptor residues histidine 351 and cysteine 381.

This sequence belongs to the thiolase-like superfamily. Thiolase family. In terms of assembly, homotetramer.

Its subcellular location is the cytoplasm. It catalyses the reaction 2 acetyl-CoA = acetoacetyl-CoA + CoA. It functions in the pathway metabolic intermediate biosynthesis; (R)-mevalonate biosynthesis; (R)-mevalonate from acetyl-CoA: step 1/3. In terms of biological role, acetyl-CoA acetyltransferase; part of the first module of ergosterol biosynthesis pathway that includes the early steps of the pathway, conserved across all eukaryotes, and which results in the formation of mevalonate from acetyl-coenzyme A (acetyl-CoA). Erg10 catalyzes the formation of acetoacetyl-CoA from acetyl-CoA. The first module starts with the action of the cytosolic acetyl-CoA acetyltransferase eg10 that catalyzes the formation of acetoacetyl-CoA. The hydroxymethylglutaryl-CoA synthases erg13 then condenses acetyl-CoA with acetoacetyl-CoA to form HMG-CoA. The rate-limiting step of the early module is the reduction to mevalonate by the 3-hydroxy-3-methylglutaryl-coenzyme A (HMG-CoA) reductases hcs1. The polypeptide is Acetyl-CoA acetyltransferase (erg10) (Schizosaccharomyces pombe (strain 972 / ATCC 24843) (Fission yeast)).